Here is a 385-residue protein sequence, read N- to C-terminus: MKDVILIANAGSSSLKISIFEIQNKQVKDKIYNIFLEKNDNKILCYINKKQESATDIKDDAIEMMIDLFEDWWKKQENLNLIATGHRIVHGGKNFNKPVIVNEKVSEDLRVLIPLNPLHQPYNLQVLDLFLQKYKEIVHIACFDTSFHFTNPPITKAFGLPKKYYAKGIIRYGFHGLSYKYVSSHFKEMTKEDLPIKTIIAHLGSGSSLCAIKNGLSLTSSMGFSVLDGVMMGTRTGNIDPGIVLYLIDHEKMTTKEITELLYKKSGLLGISGESSDIRTLLASNSPDAKFAIDLFVYRIVLEIGKLTAALEGIDGLIFTAGVGQNSAVIREMISAKLSWLGIKIDDTKNQKNEHLISTESSKVKVFAVPTNEELIIAEEVIKFL.

N9 is a binding site for Mg(2+). K16 provides a ligand contact to ATP. R87 is a substrate binding site. D144 functions as the Proton donor/acceptor in the catalytic mechanism. ATP-binding positions include 202–206 and 277–279; these read HLGSG and DIR. Residue E373 coordinates Mg(2+).

The protein belongs to the acetokinase family. In terms of assembly, homodimer. Mg(2+) is required as a cofactor. It depends on Mn(2+) as a cofactor.

It localises to the cytoplasm. It carries out the reaction acetate + ATP = acetyl phosphate + ADP. Its pathway is metabolic intermediate biosynthesis; acetyl-CoA biosynthesis; acetyl-CoA from acetate: step 1/2. In terms of biological role, catalyzes the formation of acetyl phosphate from acetate and ATP. Can also catalyze the reverse reaction. In Rickettsia akari (strain Hartford), this protein is Acetate kinase.